The following is a 707-amino-acid chain: Ribosomal RNA large subunit methyltransferase K/L (707 aa).

Residues 43–154 form the THUMP domain; the sequence is QIYRCCLWSR…KDKAILGVDM (112 aa).

The protein belongs to the methyltransferase superfamily. RlmKL family.

The protein resides in the cytoplasm. It carries out the reaction guanosine(2445) in 23S rRNA + S-adenosyl-L-methionine = N(2)-methylguanosine(2445) in 23S rRNA + S-adenosyl-L-homocysteine + H(+). The catalysed reaction is guanosine(2069) in 23S rRNA + S-adenosyl-L-methionine = N(2)-methylguanosine(2069) in 23S rRNA + S-adenosyl-L-homocysteine + H(+). Functionally, specifically methylates the guanine in position 2445 (m2G2445) and the guanine in position 2069 (m7G2069) of 23S rRNA. The polypeptide is Ribosomal RNA large subunit methyltransferase K/L (Vibrio parahaemolyticus serotype O3:K6 (strain RIMD 2210633)).